The following is a 121-amino-acid chain: Large ribosomal subunit protein uL18 (121 aa).

This sequence belongs to the universal ribosomal protein uL18 family. Part of the 50S ribosomal subunit; part of the 5S rRNA/L5/L18/L25 subcomplex. Contacts the 5S and 23S rRNAs.

Functionally, this is one of the proteins that bind and probably mediate the attachment of the 5S RNA into the large ribosomal subunit, where it forms part of the central protuberance. The protein is Large ribosomal subunit protein uL18 of Paraburkholderia phymatum (strain DSM 17167 / CIP 108236 / LMG 21445 / STM815) (Burkholderia phymatum).